Here is a 435-residue protein sequence, read N- to C-terminus: Elongation factor 1-alpha (435 aa).

One can recognise a tr-type G domain in the interval 4 to 229; the sequence is KPHLNLIVIG…DQLEIPPKPV (226 aa). Residues 13-20 are G1; the sequence is GHVDHGKS. 13–20 provides a ligand contact to GTP; the sequence is GHVDHGKS. S20 lines the Mg(2+) pocket. Residues 69-73 are G2; it reads GVTIN. Residues 90-93 form a G3 region; sequence DAPG. Residues 90-94 and 152-155 each bind GTP; these read DAPGH and NKMD. Residues 152–155 are G4; the sequence is NKMD. Positions 193–195 are G5; it reads VAP.

Belongs to the TRAFAC class translation factor GTPase superfamily. Classic translation factor GTPase family. EF-Tu/EF-1A subfamily.

It is found in the cytoplasm. It carries out the reaction GTP + H2O = GDP + phosphate + H(+). Functionally, GTP hydrolase that promotes the GTP-dependent binding of aminoacyl-tRNA to the A-site of ribosomes during protein biosynthesis. This chain is Elongation factor 1-alpha, found in Sulfolobus acidocaldarius (strain ATCC 33909 / DSM 639 / JCM 8929 / NBRC 15157 / NCIMB 11770).